The sequence spans 351 residues: Peptidyl-Lys metalloendopeptidase (351 aa).

A signal peptide spans 1–22 (MFSLSSRFFLYSLCLSAVAVSA). A propeptide spanning residues 23–183 (APGLSLSLSG…VARRSNLGKR (161 aa)) is cleaved from the precursor. Disulfide bonds link Cys189–Cys259 and Cys261–Cys281. Position 301 (His301) interacts with Zn(2+). Residue Glu302 is part of the active site. Residues His305 and Asp314 each coordinate Zn(2+).

This sequence belongs to the peptidase M35 family. Zn(2+) serves as cofactor.

The protein resides in the secreted. It carries out the reaction Preferential cleavage in proteins: -Xaa-|-Lys- (in which Xaa may be Pro).. With respect to regulation, inhibited by chelating agents such as imidazole, alpha,alpha'-bipyridine, and 1,10-phenanthroline. This is Peptidyl-Lys metalloendopeptidase (MEP) from Armillaria mellea (Honey mushroom).